The following is a 100-amino-acid chain: Replication restart protein PriB (100 aa).

One can recognise an SSB domain in the interval 1–100 (MTNRMELSGT…VLHADDIIHI (100 aa)).

Belongs to the PriB family. As to quaternary structure, homodimer. Interacts with PriA and DnaT. Component of the replication restart primosome. Primosome assembly occurs via a 'hand-off' mechanism. PriA binds to replication forks, subsequently PriB then DnaT bind; DnaT then displaces ssDNA to generate the helicase loading substrate.

Its function is as follows. Involved in the restart of stalled replication forks, which reloads the replicative helicase on sites other than the origin of replication; the PriA-PriB pathway is the major replication restart pathway. During primosome assembly it facilitates complex formation between PriA and DnaT on DNA; stabilizes PriA on DNA. Stimulates the DNA unwinding activity of PriA helicase. The sequence is that of Replication restart protein PriB from Vibrio vulnificus (strain CMCP6).